We begin with the raw amino-acid sequence, 347 residues long: Ceramide very long chain fatty acid hydroxylase scs7 (347 aa).

Over 1–156 the chain is Cytoplasmic; that stretch reads MASVTSEKCV…GNFLEPLTKT (156 aa). The chain crosses the membrane as a helical span at residues 157 to 177; the sequence is PWYMIPLIWVPCVTYGFLYAC. Residue T178 is a topological domain, lumenal. The chain crosses the membrane as a helical span at residues 179–199; it reads GIPFSVAITFFIIGLFTWTLV. Over 200 to 238 the chain is Cytoplasmic; sequence EYTMHRFLFHLDEYTPDHPIFLTMHFAFHGCHHFLPADK. Residues H204, H209, H228, H231, and H232 each coordinate Zn(2+). Residues 239–259 form a helical membrane-spanning segment; sequence YRLVMPPALFLIFATPWYHFI. Position 260 (Q260) is a topological domain, lumenal. Residues 261-281 traverse the membrane as a helical segment; the sequence is LVLPHYIGVAGFSGAILGYVF. Over 282–347 the chain is Cytoplasmic; it reads YDLTHYFLHH…EQGKISTKAK (66 aa). The Zn(2+) site is built by H286, H290, H306, H309, and H310.

It belongs to the sterol desaturase family. SCS7 subfamily. Zn(2+) serves as cofactor.

The protein localises to the endoplasmic reticulum membrane. It functions in the pathway sphingolipid metabolism. Its function is as follows. Ceramide hydroxylase involved in the hydroxylation of sphingolipid-associated very long chain fatty acids. Postulated to hydroxylate the very long chain fatty acid of dihydroceramides and phytoceramides at C-2. The protein is Ceramide very long chain fatty acid hydroxylase scs7 of Schizosaccharomyces pombe (strain 972 / ATCC 24843) (Fission yeast).